The following is a 1106-amino-acid chain: Carbamoyl phosphate synthase large chain (1106 aa).

The interval 1 to 402 (MPRRQDLNSV…ALQKAMRSLE (402 aa)) is carboxyphosphate synthetic domain. ATP is bound by residues arginine 129, arginine 169, glycine 175, glycine 176, glutamate 208, isoleucine 210, glutamate 215, glycine 241, valine 242, histidine 243, glutamine 285, and glutamate 299. In terms of domain architecture, ATP-grasp 1 spans 133–328 (KGVVERCGAE…IAKIATKLSL (196 aa)). Positions 285, 299, and 301 each coordinate Mg(2+). Glutamine 285, glutamate 299, and asparagine 301 together coordinate Mn(2+). The segment at 403 to 550 (QKGSAFSFAR…YHYSSYDRET (148 aa)) is oligomerization domain. Positions 551-953 (EVAPHEKPSV…AFAKAQAAAG (403 aa)) are carbamoyl phosphate synthetic domain. An ATP-grasp 2 domain is found at 681–872 (ARVLTEAGLR…MAKAAALIGT (192 aa)). ATP is bound by residues arginine 717, lysine 756, leucine 758, glutamate 763, glycine 788, isoleucine 789, histidine 790, serine 791, glutamine 831, and glutamate 843. The Mg(2+) site is built by glutamine 831, glutamate 843, and asparagine 845. The Mn(2+) site is built by glutamine 831, glutamate 843, and asparagine 845. In terms of domain architecture, MGS-like spans 954–1106 (GPLPTSGSLF…ERAAQEASRD (153 aa)). Residues 954 to 1106 (GPLPTSGSLF…ERAAQEASRD (153 aa)) form an allosteric domain region.

This sequence belongs to the CarB family. In terms of assembly, composed of two chains; the small (or glutamine) chain promotes the hydrolysis of glutamine to ammonia, which is used by the large (or ammonia) chain to synthesize carbamoyl phosphate. Tetramer of heterodimers (alpha,beta)4. Requires Mg(2+) as cofactor. Mn(2+) serves as cofactor.

It carries out the reaction hydrogencarbonate + L-glutamine + 2 ATP + H2O = carbamoyl phosphate + L-glutamate + 2 ADP + phosphate + 2 H(+). The catalysed reaction is hydrogencarbonate + NH4(+) + 2 ATP = carbamoyl phosphate + 2 ADP + phosphate + 2 H(+). It participates in amino-acid biosynthesis; L-arginine biosynthesis; carbamoyl phosphate from bicarbonate: step 1/1. Its pathway is pyrimidine metabolism; UMP biosynthesis via de novo pathway; (S)-dihydroorotate from bicarbonate: step 1/3. Its function is as follows. Large subunit of the glutamine-dependent carbamoyl phosphate synthetase (CPSase). CPSase catalyzes the formation of carbamoyl phosphate from the ammonia moiety of glutamine, carbonate, and phosphate donated by ATP, constituting the first step of 2 biosynthetic pathways, one leading to arginine and/or urea and the other to pyrimidine nucleotides. The large subunit (synthetase) binds the substrates ammonia (free or transferred from glutamine from the small subunit), hydrogencarbonate and ATP and carries out an ATP-coupled ligase reaction, activating hydrogencarbonate by forming carboxy phosphate which reacts with ammonia to form carbamoyl phosphate. This Kocuria rhizophila (strain ATCC 9341 / DSM 348 / NBRC 103217 / DC2201) protein is Carbamoyl phosphate synthase large chain.